We begin with the raw amino-acid sequence, 309 residues long: ADP-L-glycero-D-manno-heptose-6-epimerase (309 aa).

Residues 10–11 (FI), 31–32 (DN), Lys38, Lys53, 75–79 (EGACS), and Asn92 each bind NADP(+). Residue Tyr140 is the Proton acceptor of the active site. Residue Lys144 participates in NADP(+) binding. Position 169 (Asn169) interacts with substrate. NADP(+) contacts are provided by Val170 and Lys178. Lys178 serves as the catalytic Proton acceptor. Substrate-binding positions include Ser180, His187, 201–204 (FEGS), Arg209, and Tyr272.

It belongs to the NAD(P)-dependent epimerase/dehydratase family. HldD subfamily. In terms of assembly, homopentamer. It depends on NADP(+) as a cofactor.

It carries out the reaction ADP-D-glycero-beta-D-manno-heptose = ADP-L-glycero-beta-D-manno-heptose. It participates in nucleotide-sugar biosynthesis; ADP-L-glycero-beta-D-manno-heptose biosynthesis; ADP-L-glycero-beta-D-manno-heptose from D-glycero-beta-D-manno-heptose 7-phosphate: step 4/4. In terms of biological role, catalyzes the interconversion between ADP-D-glycero-beta-D-manno-heptose and ADP-L-glycero-beta-D-manno-heptose via an epimerization at carbon 6 of the heptose. The chain is ADP-L-glycero-D-manno-heptose-6-epimerase from Enterobacter sp. (strain 638).